A 447-amino-acid chain; its full sequence is GTPase Der (447 aa).

2 EngA-type G domains span residues 4–165 (KIIT…PEEE) and 180–357 (LQIV…KIWN). Residues 10-17 (GRPNVGKS), 57-61 (DTPGL), 119-122 (NKCE), 186-193 (GRPNAGKS), 233-237 (DTAGL), and 298-301 (NKWD) each bind GTP. The KH-like domain maps to 358–443 (KKITTSKLNE…PIRFTYVKTK (86 aa)).

The protein belongs to the TRAFAC class TrmE-Era-EngA-EngB-Septin-like GTPase superfamily. EngA (Der) GTPase family. In terms of assembly, associates with the 50S ribosomal subunit.

In terms of biological role, GTPase that plays an essential role in the late steps of ribosome biogenesis. The protein is GTPase Der of Rickettsia felis (strain ATCC VR-1525 / URRWXCal2) (Rickettsia azadi).